The sequence spans 188 residues: Ribosomal RNA small subunit methyltransferase G (188 aa).

Residues Gly69, Phe74, 119–120 (VQ), and Arg134 each bind S-adenosyl-L-methionine.

The protein belongs to the methyltransferase superfamily. RNA methyltransferase RsmG family.

The protein resides in the cytoplasm. It catalyses the reaction guanosine(527) in 16S rRNA + S-adenosyl-L-methionine = N(7)-methylguanosine(527) in 16S rRNA + S-adenosyl-L-homocysteine. In terms of biological role, specifically methylates the N7 position of guanine in position 527 of 16S rRNA. The protein is Ribosomal RNA small subunit methyltransferase G of Campylobacter jejuni subsp. doylei (strain ATCC BAA-1458 / RM4099 / 269.97).